The following is a 135-amino-acid chain: Transcription antitermination protein NusB (135 aa).

It belongs to the NusB family.

In terms of biological role, involved in transcription antitermination. Required for transcription of ribosomal RNA (rRNA) genes. Binds specifically to the boxA antiterminator sequence of the ribosomal RNA (rrn) operons. This chain is Transcription antitermination protein NusB, found in Nocardioides sp. (strain ATCC BAA-499 / JS614).